A 108-amino-acid chain; its full sequence is Large ribosomal subunit protein bL31B (108 aa).

A disordered region spans residues A88 to K108. The segment covering K97–K108 has biased composition (basic residues).

The protein belongs to the bacterial ribosomal protein bL31 family. Type B subfamily. As to quaternary structure, part of the 50S ribosomal subunit.

This chain is Large ribosomal subunit protein bL31B, found in Chlamydia abortus (strain DSM 27085 / S26/3) (Chlamydophila abortus).